The primary structure comprises 294 residues: Elongation factor Ts (294 aa).

The tract at residues 82 to 85 (TDFV) is involved in Mg(2+) ion dislocation from EF-Tu.

The protein belongs to the EF-Ts family.

It localises to the cytoplasm. Functionally, associates with the EF-Tu.GDP complex and induces the exchange of GDP to GTP. It remains bound to the aminoacyl-tRNA.EF-Tu.GTP complex up to the GTP hydrolysis stage on the ribosome. This Nitrosomonas eutropha (strain DSM 101675 / C91 / Nm57) protein is Elongation factor Ts.